A 528-amino-acid chain; its full sequence is GMP synthase [glutamine-hydrolyzing] (528 aa).

The region spanning 13-204 (AIVILDFGSQ…VYHVCGCDPD (192 aa)) is the Glutamine amidotransferase type-1 domain. Cysteine 90 serves as the catalytic Nucleophile. Residues histidine 178 and glutamate 180 contribute to the active site. In terms of domain architecture, GMPS ATP-PPase spans 205–403 (WTTAAFIDEA…LGLPEEIVRR (199 aa)). 232 to 238 (SGGVDSS) contacts ATP.

Homodimer.

It catalyses the reaction XMP + L-glutamine + ATP + H2O = GMP + L-glutamate + AMP + diphosphate + 2 H(+). The protein operates within purine metabolism; GMP biosynthesis; GMP from XMP (L-Gln route): step 1/1. In terms of biological role, catalyzes the synthesis of GMP from XMP. The sequence is that of GMP synthase [glutamine-hydrolyzing] from Synechococcus sp. (strain CC9605).